A 501-amino-acid polypeptide reads, in one-letter code: Splicing factor ESS-2 homolog (501 aa).

2 stretches are compositionally biased toward low complexity: residues 1–18 and 105–115; these read MSAT…GTPG and ISGTGRSTSRR. Disordered regions lie at residues 1-20 and 105-163; these read MSAT…PGSL and ISGT…GRDT. A compositionally biased stretch (polar residues) spans 126–151; the sequence is TPVSQAKCSNTPLPNSRATDTPFSTD. Basic and acidic residues predominate over residues 152–163; sequence GSEKSDAEGRDT. S409 and S411 each carry phosphoserine. A disordered region spans residues 425-471; the sequence is RGTPRLRHTPSPMSGRKRKVTPGVVRSTNTPILGEPKPKQQAKISTP.

This sequence belongs to the ESS2 family.

It is found in the nucleus. The sequence is that of Splicing factor ESS-2 homolog (Es2) from Drosophila melanogaster (Fruit fly).